The primary structure comprises 1516 residues: MRILPSPGMPALLSLVSLLSVLLMGCVAESPPVFIKKPVDQIGVSGGVASFVCQATGDPKPRVTWNKKGKKVNSQRFETIEFDESAGAVLRIQPLRTPRDENIYECVAQNPHGEVTVHAKLTVLREDQLPPGFPNIDMGPQLKVVERTRTATMLCAASGNPDPEITWFKDFLPVDPSTSNGRIKQLRSGGLQIESSEETDQGKYECVASNSAGVRYSSPANLYVRELREVRRVAPRFSILPVSHEIMPGGNVNITCVAVGSPMPYVKWMQGAEDLTPEDDMPVGRNVLELTDVKDSANYTCVAMSSLGVIEAVAQITVKSLPKAPGTPVVTETTATSITITWDSGNPDPVSYYVIEYKSKSQDGPYQIKEDITTTRYSIGGLSPNSEYEIWVSAVNSIGQGPPSESVVTRTGEQAPASAPRNVQGRMLSSTTMIIQWEEPVEPNGQIRGYRVYYTMEPDQPVSNWQKHNVDDSLLTTVGSLLEDETYTVRVLAFTSVGDGPLSDPIQVKTQQGVPGQPMNFRAEAKTETSIVLSWSPPRQEIIVKYELLFKEGDHGREVPRNFEPTTSFTVEGLKPNTEYVFRLAARSALGLGAFTPEVRERTLQSILPKNFKVKMVTKTSVLLSWEFPENYNSPTPYKIQYNGLNVDVDGRTTKKLITNLKPHTFYNFVLMNRGNSMGGLQQNVAAWTAANMLSRKPEVTHKPDADGNVVVILPDVKSSVAVQAYYIVVVPLRKSRGGQFLNPLGSPEEMDLEELIQDIARLRRRSLRHSRQLDFPKPYIAARFRSLPNHFVLGDMKHYDNFENRALEPGQRYVIFILAVLQEPEATFAASPFSDPIQLDNPDPQPIIDGEEGLIWVIGPVLAVVFIICIVIAILLYKNKRKDSEPRTKCLLNNAEITPHHPKDPVEMRRINFQTPDSGLSSPLSDPEFDFESMLSHPPIPVSELAEHTEHLKANDNLKLSQEYESIDPGQQFTWEHSNLEVNKPKNRYANVIAYDHSRVILLPIEGIVGSDYINANYIDGYRKQNAYIATQGPLPETFGDFWRMVWEQRSATIVMMTKLEEKSRIKCDQYWPGRGTDTYGMIQVTLLDTIELATFCVRTFSLHKNGSSEKREVRQFQFTAWPDHGVPEYPTPFLAFLRRVKTCNPPDAGPIVVHCSAGVGRTGCFIVIDAMLERIKHEKTVDIYGHVTLMRSQRNYMVQTEDQYSFIHDALLEAVACGNTEVPARNLYTYIQKLAQIEVGEHVTGMELEFKRLANSKAHTSRFISANLPCNKFKNRLVNIMPYETTRVCLQPIRGVEGSDYINASFIDGYRQQKAYIATQGPLAETTEDFWRMLWEHNSTIVVMLTKLREMGREKCHQYWPAERSARYQYFVVDPMAEYNMPQYILREFKVTDARDGQSRTVRQFQFTDWPEQGVPKSGEGFIDFIGQVHKTKEQFGQDGPISVHCSAGVGRTGVFITLSIVLERMRYEGVVDIFQTVKMLRTQRPAMVQTEDEYQFCYQAALEYLGSFDHYAT.

The signal sequence occupies residues 1 to 28 (MRILPSPGMPALLSLVSLLSVLLMGCVA). The Extracellular portion of the chain corresponds to 29-854 (ESPPVFIKKP…PQPIIDGEEG (826 aa)). Ig-like C2-type domains follow at residues 32–122 (PVFI…AKLT), 134–223 (PNID…ANLY), and 235–317 (PRFS…AQIT). Intrachain disulfides connect Cys-53–Cys-106 and Cys-155–Cys-206. The interval 67 to 71 (KKGKK) is important for binding to glycosaminoglycan chains. 2 N-linked (GlcNAc...) asparagine glycosylation sites follow: Asn-253 and Asn-298. A disulfide bridge links Cys-256 with Cys-301. Fibronectin type-III domains are found at residues 324 to 414 (APGT…TGEQ), 419 to 513 (APRN…TQQG), 517 to 606 (QPMN…TLQS), and 608 to 692 (LPKN…TAAN). A helical membrane pass occupies residues 855 to 875 (LIWVIGPVLAVVFIICIVIAI). The Cytoplasmic portion of the chain corresponds to 876-1516 (LLYKNKRKDS…YLGSFDHYAT (641 aa)). Tyrosine-protein phosphatase domains lie at 961 to 1216 (LSQE…LLEA) and 1248 to 1507 (MELE…ALEY). Active-site phosphocysteine intermediate residues include Cys-1157 and Cys-1448.

This sequence belongs to the protein-tyrosine phosphatase family. Receptor class 2A subfamily. Homodimer. Binding to large heparan sulfate proteoglycan structures promotes oligomerization. Binding to chondroitin sulfate proteoglycan does not lead to oligomerization. Interacts (via Ig-like domains) with NTRK1 and NTRK3, but does not form detectable complexes with NTRK2. Interacts (via extracellular domain) with the heparan sulfate proteoglycans AGRN and COL18A1. A cleavage occurs, separating the extracellular domain from the transmembrane segment. This process called 'ectodomain shedding' is thought to be involved in receptor desensitization, signal transduction and/or membrane localization. Detected in embryonic brain, dorsal root ganglion and spinal cord. Detected in embryonic retina (at protein level). Detected in embryonic brain, spinal cord, dorsal root ganglion, trigeminal ganglion, ganglia associated with the precardinal vein and vagus nerve, the inner and outer nuclear layer of the retina, limb, breast muscle, heart, gut and lung.

The protein localises to the cell membrane. It localises to the cell projection. It is found in the axon. Its subcellular location is the perikaryon. The protein resides in the cytoplasmic vesicle. The protein localises to the secretory vesicle. It localises to the synaptic vesicle membrane. It is found in the synapse. Its subcellular location is the synaptosome. The protein resides in the postsynaptic density. The protein localises to the neuron projection. It localises to the growth cone. It carries out the reaction O-phospho-L-tyrosyl-[protein] + H2O = L-tyrosyl-[protein] + phosphate. Cell surface receptor that binds to glycosaminoglycans, including chondroitin sulfate proteoglycans and heparan sulfate proteoglycans. Binding to chondroitin sulfate and heparan sulfate proteoglycans has opposite effects on PTPRS oligomerization and regulation of neurite outgrowth. Contributes to the inhibition of neurite and axonal outgrowth by chondroitin sulfate proteoglycans, also after nerve transection. Plays a role in stimulating neurite outgrowth in response to the heparan sulfate proteoglycan GPC2. Required for normal brain development, especially for normal development of the pituitary gland and the olfactory bulb. Functions as tyrosine phosphatase. Mediates dephosphorylation of NTRK1, NTRK2 and NTRK3. Plays a role in down-regulation of signaling cascades that lead to the activation of Akt and MAP kinases. Down-regulates TLR9-mediated activation of NF-kappa-B, as well as production of TNF, interferon alpha and interferon beta. This Gallus gallus (Chicken) protein is Receptor-type tyrosine-protein phosphatase S (PTPRS).